Here is a 120-residue protein sequence, read N- to C-terminus: Aspartate 1-decarboxylase (120 aa).

Ser-25 serves as the catalytic Schiff-base intermediate with substrate; via pyruvic acid. Pyruvic acid (Ser) is present on Ser-25. Thr-57 contacts substrate. The active-site Proton donor is Tyr-58. Residue 73–75 coordinates substrate; that stretch reads GAA.

Belongs to the PanD family. In terms of assembly, heterooctamer of four alpha and four beta subunits. Requires pyruvate as cofactor. Is synthesized initially as an inactive proenzyme, which is activated by self-cleavage at a specific serine bond to produce a beta-subunit with a hydroxyl group at its C-terminus and an alpha-subunit with a pyruvoyl group at its N-terminus.

Its subcellular location is the cytoplasm. The catalysed reaction is L-aspartate + H(+) = beta-alanine + CO2. The protein operates within cofactor biosynthesis; (R)-pantothenate biosynthesis; beta-alanine from L-aspartate: step 1/1. In terms of biological role, catalyzes the pyruvoyl-dependent decarboxylation of aspartate to produce beta-alanine. This chain is Aspartate 1-decarboxylase, found in Deinococcus radiodurans (strain ATCC 13939 / DSM 20539 / JCM 16871 / CCUG 27074 / LMG 4051 / NBRC 15346 / NCIMB 9279 / VKM B-1422 / R1).